Reading from the N-terminus, the 412-residue chain is Proteasome-activating nucleotidase (412 aa).

A coiled-coil region spans residues 15 to 73 (EDIYQYLLERITNLENRNLELREQFRQMESEKRYVETQKIRYERELRKLKSEIEQLRSP). Residues 197 to 202 (GTGKTL) and His-336 each bind ATP. Residues 410–412 (MFA) form a docks into pockets in the proteasome alpha-ring to cause gate opening region.

This sequence belongs to the AAA ATPase family. Homohexamer. The hexameric complex has a two-ring architecture resembling a top hat that caps the 20S proteasome core at one or both ends. Upon ATP-binding, the C-terminus of PAN interacts with the alpha-rings of the proteasome core by binding to the intersubunit pockets.

It localises to the cytoplasm. In terms of biological role, ATPase which is responsible for recognizing, binding, unfolding and translocation of substrate proteins into the archaeal 20S proteasome core particle. Is essential for opening the gate of the 20S proteasome via an interaction with its C-terminus, thereby allowing substrate entry and access to the site of proteolysis. Thus, the C-termini of the proteasomal ATPase function like a 'key in a lock' to induce gate opening and therefore regulate proteolysis. Unfolding activity requires energy from ATP hydrolysis, whereas ATP binding alone promotes ATPase-20S proteasome association which triggers gate opening, and supports translocation of unfolded substrates. The sequence is that of Proteasome-activating nucleotidase from Methanoculleus marisnigri (strain ATCC 35101 / DSM 1498 / JR1).